The chain runs to 421 residues: 4-methylaminobutanoate oxidase (methylamine-forming) (421 aa).

4 residues coordinate FAD: glutamate 31, arginine 33, arginine 39, and glutamate 379.

Belongs to the flavin monoamine oxidase family. Monomer. Requires FAD as cofactor.

It carries out the reaction 4-(methylamino)butanoate + O2 + H2O = succinate semialdehyde + methylamine + H2O2. Its pathway is alkaloid degradation; nicotine degradation. Functionally, catalyzes the removal of methylamine from 4-methylaminobutanoate with the formation of succinate semialdehyde. Is involved in the catabolism of 4-methylaminobutanoate produced from nicotine. Has a very weak monoamine oxidase activity with 4-aminobutanoate. Cannot use spermidine, spermine, sarcosine, dimethylglycine, glycine, choline, betaine, alpha-methylamino isobutyrate, methylamine propionitrile and methylamino propylamine as substrate. This is 4-methylaminobutanoate oxidase (methylamine-forming) (mao) from Paenarthrobacter nicotinovorans (Arthrobacter nicotinovorans).